A 227-amino-acid polypeptide reads, in one-letter code: ATP-dependent dethiobiotin synthetase BioD (227 aa).

An ATP-binding site is contributed by Asp-13 to Tyr-18. Thr-17 is a binding site for Mg(2+). Lys-38 is an active-site residue. Ser-42 serves as a coordination point for substrate. ATP-binding positions include Asp-55, Glu-116–Gly-119, and Asn-179–Asn-180. The Mg(2+) site is built by Asp-55 and Glu-116.

Belongs to the dethiobiotin synthetase family. Homodimer. The cofactor is Mg(2+).

The protein resides in the cytoplasm. It carries out the reaction (7R,8S)-7,8-diammoniononanoate + CO2 + ATP = (4R,5S)-dethiobiotin + ADP + phosphate + 3 H(+). The protein operates within cofactor biosynthesis; biotin biosynthesis; biotin from 7,8-diaminononanoate: step 1/2. Its function is as follows. Catalyzes a mechanistically unusual reaction, the ATP-dependent insertion of CO2 between the N7 and N8 nitrogen atoms of 7,8-diaminopelargonic acid (DAPA, also called 7,8-diammoniononanoate) to form a ureido ring. This Clostridium botulinum (strain Kyoto / Type A2) protein is ATP-dependent dethiobiotin synthetase BioD.